The primary structure comprises 386 residues: Short-chain dehydrogenase/reductase family 42E member 1 (386 aa).

Tyrosine 150 acts as the Proton acceptor in catalysis. Lysine 154 contributes to the NAD(+) binding site. The next 2 membrane-spanning stretches (helical) occupy residues 279 to 299 (FPLS…FFIS) and 363 to 383 (YLIW…SWLP).

The protein belongs to the 3-beta-HSD family.

It localises to the membrane. The sequence is that of Short-chain dehydrogenase/reductase family 42E member 1 (sdr42e1) from Xenopus laevis (African clawed frog).